A 186-amino-acid chain; its full sequence is Transposon Tn501 resolvase (186 aa).

Positions 4–137 (HRIGYVRVSS…EGITLAKQRG (134 aa)) constitute a Resolvase/invertase-type recombinase catalytic domain. The active-site O-(5'-phospho-DNA)-serine intermediate is the Ser12. The segment at 17 to 38 (NPERQLEQTQVSKVFTDKASGK) is disordered. The segment at residues 164-183 (KAQLAREFNISRETLYQYLR) is a DNA-binding region (H-T-H motif).

This sequence belongs to the site-specific recombinase resolvase family.

Functionally, resolvase catalyzes the resolution (a site-specific recombination) of the cointegrated replicon to yield the final transposition products. The protein is Transposon Tn501 resolvase (tnpR) of Pseudomonas aeruginosa.